A 203-amino-acid chain; its full sequence is uncharacterized protein (203 aa).

Residues 174–203 (LASSKNPRARSPGLDPLGSSETLWSHRGGH) form a disordered region.

This is an uncharacterized protein from Homo sapiens (Human).